Reading from the N-terminus, the 293-residue chain is Mating-type protein A-1 (293 aa).

The segment at residues 42-97 (AAKKKVNGFMGFRSYYSPLFSQLPQKERSPFMTILWQHDPFHNEWDFMCSVYSSIR) is a DNA-binding region (alpha box).

This sequence belongs to the MATALPHA1 family.

It is found in the nucleus. Its function is as follows. Mating type proteins are sequence specific DNA-binding proteins that act as master switches in yeast differentiation by controlling gene expression in a cell type-specific fashion. Transcriptional activator that induces the transcription of A-specific genes like mating factor ccg-4. Required for mating as an A-cell and for blocking of heterokaryon formation (vegetative incompatibility). The sequence is that of Mating-type protein A-1 (mtA-1) from Neurospora crassa (strain ATCC 24698 / 74-OR23-1A / CBS 708.71 / DSM 1257 / FGSC 987).